An 80-amino-acid polypeptide reads, in one-letter code: Keratin-associated protein 6-1 (80 aa).

Belongs to the KRTAP type 6 family. As to quaternary structure, interacts with hair keratins.

Its function is as follows. In the hair cortex, hair keratin intermediate filaments are embedded in an interfilamentous matrix, consisting of hair keratin-associated proteins (KRTAP), which are essential for the formation of a rigid and resistant hair shaft through their extensive disulfide bond cross-linking with abundant cysteine residues of hair keratins. The matrix proteins include the high-sulfur and high-glycine-tyrosine keratins. This Oryctolagus cuniculus (Rabbit) protein is Keratin-associated protein 6-1 (KRTAP6-1).